The primary structure comprises 475 residues: Probable sensor histidine kinase TcrY (475 aa).

Topologically, residues 1–153 are extracellular; sequence MGITAATEMA…NVDATMLQML (153 aa). The helical transmembrane segment at 154–174 threads the bilayer; that stretch reads IIFGIVTVIALVAATTAGIVI. The Cytoplasmic segment spans residues 175–475; that stretch reads IKRALAPLRR…GWQPLESSPR (301 aa). Residues 176–238 enclose the HAMP domain; it reads KRALAPLRRV…MLDHIAAALS (63 aa). The region spanning 253–466 is the Histidine kinase domain; that stretch reads DASHELRTPL…EFAVRLPLDG (214 aa). His-256 is subject to Phosphohistidine; by autocatalysis.

Homodimer. The cofactor is a divalent metal cation. Autophosphorylated.

The protein localises to the cell membrane. The catalysed reaction is ATP + protein L-histidine = ADP + protein N-phospho-L-histidine.. In terms of biological role, member of the two-component regulatory system TcrY/TcrX. Activates TcrX by phosphorylation. The polypeptide is Probable sensor histidine kinase TcrY (tcrY) (Mycobacterium tuberculosis (strain ATCC 25618 / H37Rv)).